We begin with the raw amino-acid sequence, 1251 residues long: Insulin receptor substrate 1 (1251 aa).

The residue at position 3 (serine 3) is a Phosphoserine. The tract at residues 3–137 is mediates interaction with PHIP; sequence SPPESDGFSD…GAGGGGGSCS (135 aa). Residues 12-115 enclose the PH domain; it reads DVRKVGYLRK…WYQALLQLHN (104 aa). Residue serine 99 is modified to Phosphoserine; by CK2. Residues 160–264 form the IRS-type PTB domain; it reads FKEVWQVILK…EAMRAMSDEF (105 aa). Residues 262–430 are disordered; the sequence is DEFRPRSKSQ…SDGGFISSDE (169 aa). Low complexity predominate over residues 269 to 281; it reads KSQSSSNCSNPIS. At serine 270 the chain carries Phosphoserine. Serine 307 is subject to Phosphoserine; by RPS6KB1. A Phosphoserine; by IKKB, MAPK8 and RPS6KB1 modification is found at serine 312. 4 positions are modified to phosphoserine: serine 323, serine 330, serine 345, and serine 348. Positions 354–363 are enriched in basic residues; that stretch reads THAHRHRGSA. Low complexity-rich tracts occupy residues 383–404 and 412–424; these read SPSA…GSTS and SSAS…SDGG. At serine 419 the chain carries Phosphoserine. Residues threonine 446 and threonine 453 each carry the phosphothreonine modification. The residue at position 465 (tyrosine 465) is a Phosphotyrosine; by INSR. A YXXM motif 1 motif is present at residues 465–468; sequence YICM. A disordered region spans residues 494–513; that stretch reads YTPGTGLGTSPALAGDEASS. Phosphoserine; by RPS6KB1 is present on serine 527. Residues 551–554 carry the YXXM motif 2 motif; that stretch reads YTEM. The span at 594–610 shows a compositional bias: basic and acidic residues; sequence RRGGHHRPDSSTLHTDD. A disordered region spans residues 594–616; sequence RRGGHHRPDSSTLHTDDGYMPMS. Position 612 is a phosphotyrosine; by INSR (tyrosine 612). The YXXM motif 3 signature appears at 612–615; it reads YMPM. Serine 629 is modified (phosphoserine). Tyrosine 632 carries the post-translational modification Phosphotyrosine; by INSR. The short motif at 632–635 is the YXXM motif 4 element; that stretch reads YMPM. The residue at position 636 (serine 636) is a Phosphoserine; by RPS6KB1. Tyrosine 662 bears the Phosphotyrosine mark. A YXXM motif 5 motif is present at residues 662 to 665; that stretch reads YMMM. The disordered stretch occupies residues 668 to 692; sequence SGGCSPDIGGGPSSSSSSTVPSGSS. A YXXM motif 6 motif is present at residues 730 to 733; it reads YMNM. Disordered regions lie at residues 734–753 and 769–946; these read SPVG…GPED and FKHT…EETG. Residues 774 to 783 show a composition bias toward basic and acidic residues; that stretch reads RPGEPEEGAR. At serine 792 the chain carries Phosphoserine; by AMPK and SIK2. Composition is skewed to low complexity over residues 799–813 and 875–891; these read AATA…SSDS and QQQQ…QQQQ. Residue serine 901 is modified to Phosphoserine. Tyrosine 905 carries the phosphotyrosine; by INSR modification. The interval 905-907 is GRB2-binding; sequence YVN. Over residues 924–937 the composition is skewed to polar residues; the sequence is SRSSPSVRCPSQLQ. Tyrosine 950 and tyrosine 998 each carry phosphotyrosine; by INSR. 3 short sequence motifs (YXXM motif) span residues 950-953, 998-1001, and 1021-1024; these read YMKM, YMTM, and YADM. 2 disordered regions span residues 1091–1124 and 1130–1149; these read NQSA…RVGN and AGAA…DVKR. Serine 1109 and serine 1110 each carry phosphoserine. The segment covering 1111-1123 has biased composition (polar residues); it reads ETFSSTPSATRVG. Tyrosine 1188 is modified (phosphotyrosine; by INSR). Residue lysine 1195 forms a Glycyl lysine isopeptide (Lys-Gly) (interchain with G-Cter in ubiquitin) linkage. Positions 1195–1251 are disordered; the sequence is KDFKQRPQECTPQPQPPPPPPPHQPLGSSESSSTRRSSEDLSAYASISFQKQPEDLQ. The segment covering 1207-1218 has biased composition (pro residues); sequence QPQPPPPPPPHQ. At tyrosine 1238 the chain carries Phosphotyrosine; by INSR.

As to quaternary structure, interacts with UBTF and PIK3CA. Interacts (via phosphorylated YXXM motifs) with PIK3R1. Interacts with ROCK1 and FER. Interacts (via PH domain) with PHIP. Interacts with GRB2. Interacts with SOCS7. Interacts (via IRS-type PTB domain) with IGF1R and INSR (via the tyrosine-phosphorylated NPXY motif). Interacts with ALK. Interacts with EIF2AK2/PKR. Interacts with GKAP1. Interacts with DGKZ in the absence of insulin; insulin stimulation decreases this interaction. Found in a ternary complex with DGKZ and PIP5K1A in the absence of insulin stimulation. Interacts with SQSTM1; the interaction is disrupted by the presence of tensin TNS2. Interacts with NCK1 (via SH2 domain). Interacts with NCK2 (via SH3 domain). Interacts with SH2B1; this interaction enhances leptin-induced activation of the PI3-kinase pathway. Interacts with DVL2; this interaction promotes the Wnt/beta-catenin signaling pathway. Interacts with JAK1. Post-translationally, serine phosphorylation of IRS1 is a mechanism for insulin resistance. Ser-312 phosphorylation inhibits insulin action through disruption of IRS1 interaction with the insulin receptor. Phosphorylation of Tyr-905 is required for GRB2-binding. Phosphorylated by ALK. Phosphorylated at Ser-270, Ser-307, Ser-636 and Ser-1109 by RPS6KB1; phosphorylation induces accelerated degradation of IRS1. Phosphorylated on tyrosine residues in response to insulin. In skeletal muscles, dephosphorylated on Tyr-612 by TNS2 under anabolic conditions; dephosphorylation results in the proteasomal degradation of IRS1. In terms of processing, ubiquitinated by the Cul7-RING(FBXW8) complex in a mTOR-dependent manner, leading to its degradation: the Cul7-RING(FBXW8) complex recognizes and binds IRS1 previously phosphorylated by S6 kinase (RPS6KB1 or RPS6KB2). Ubiquitinated by TRAF4 through 'Lys-29' linkage; this ubiquitination regulates the interaction of IRS1 with IGFR and IRS1 tyrosine phosphorylation upon IGF1 stimulation. S-nitrosylation at by BLVRB inhibits its activity.

The protein localises to the cytoplasm. It is found in the nucleus. Its function is as follows. Signaling adapter protein that participates in the signal transduction from two prominent receptor tyrosine kinases, insulin receptor/INSR and insulin-like growth factor I receptor/IGF1R. Plays therefore an important role in development, growth, glucose homeostasis as well as lipid metabolism. Upon phosphorylation by the insulin receptor, functions as a signaling scaffold that propagates insulin action through binding to SH2 domain-containing proteins including the p85 regulatory subunit of PI3K, NCK1, NCK2, GRB2 or SHP2. Recruitment of GRB2 leads to the activation of the guanine nucleotide exchange factor SOS1 which in turn triggers the Ras/Raf/MEK/MAPK signaling cascade. Activation of the PI3K/AKT pathway is responsible for most of insulin metabolic effects in the cell, and the Ras/Raf/MEK/MAPK is involved in the regulation of gene expression and in cooperation with the PI3K pathway regulates cell growth and differentiation. Acts a positive regulator of the Wnt/beta-catenin signaling pathway through suppression of DVL2 autophagy-mediated degradation leading to cell proliferation. The chain is Insulin receptor substrate 1 (IRS1) from Chlorocebus aethiops (Green monkey).